A 396-amino-acid chain; its full sequence is Beta-1,4-galactosyltransferase 3 (396 aa).

Topologically, residues 1 to 10 (MLRRLLERPC) are cytoplasmic. A helical; Signal-anchor for type II membrane protein transmembrane segment spans residues 11-31 (TLALLVGSQLAVMMYLSLGGF). The Lumenal segment spans residues 32–396 (RSLSALFGRE…ANHTAPHGSH (365 aa)). Asn-57 carries N-linked (GlcNAc...) asparagine glycosylation. A disulfide bridge links Cys-80 with Cys-122. 133-137 (PHRAR) provides a ligand contact to UDP-alpha-D-galactose. N-linked (GlcNAc...) asparagine glycosylation occurs at Asn-169. UDP-alpha-D-galactose-binding positions include 172-174 (FNR), 199-200 (VD), Tyr-229, and Trp-261. Cysteines 193 and 212 form a disulfide. Residue Asp-200 participates in Mn(2+) binding. Position 263–266 (263–266 (GEDD)) interacts with N-acetyl-D-glucosamine. His-294 contacts Mn(2+). 294-296 (HRG) is a UDP-alpha-D-galactose binding site. Position 306 (Arg-306) interacts with N-acetyl-D-glucosamine. Asn-340 carries N-linked (GlcNAc...) asparagine glycosylation. The tract at residues 341 to 396 (ITADIGTDPRGPRTSSGPHYPPGSSQAFRQEMLQRRPPARPGPLPTANHTAPHGSH) is disordered. The span at 353–368 (RTSSGPHYPPGSSQAF) shows a compositional bias: polar residues. Asn-388 is a glycosylation site (N-linked (GlcNAc...) asparagine).

It belongs to the glycosyltransferase 7 family. Mn(2+) is required as a cofactor.

It is found in the golgi apparatus. It localises to the golgi stack membrane. It catalyses the reaction an N-acetyl-beta-D-glucosaminyl derivative + UDP-alpha-D-galactose = a beta-D-galactosyl-(1-&gt;4)-N-acetyl-beta-D-glucosaminyl derivative + UDP + H(+). It carries out the reaction N-acetyl-D-glucosamine + UDP-alpha-D-galactose = beta-D-galactosyl-(1-&gt;4)-N-acetyl-D-glucosamine + UDP + H(+). The enzyme catalyses a beta-D-GlcNAc-(1-&gt;3)-beta-D-Gal-(1-&gt;4)-beta-D-Glc-(1&lt;-&gt;1)-Cer(d18:1(4E)) + UDP-alpha-D-galactose = a neolactoside nLc4Cer(d18:1(4E)) + UDP + H(+). The catalysed reaction is a beta-D-glucosylceramide + UDP-alpha-D-galactose = a beta-D-galactosyl-(1-&gt;4)-beta-D-glucosyl-(1&lt;-&gt;1)-ceramide + UDP + H(+). It catalyses the reaction a neolactoside IV(3)-beta-GlcNAc-nLc4Cer + UDP-alpha-D-galactose = a neolactoside nLc6Cer + UDP + H(+). Its pathway is protein modification; protein glycosylation. In terms of biological role, responsible for the synthesis of complex-type N-linked oligosaccharides in many glycoproteins as well as the carbohydrate moieties of glycolipids. This chain is Beta-1,4-galactosyltransferase 3 (B4GALT3), found in Bos taurus (Bovine).